The primary structure comprises 37 residues: Protein YhiY (37 aa).

This chain is Protein YhiY, found in Escherichia coli (strain K12).